Reading from the N-terminus, the 254-residue chain is Methyl-CpG-binding domain-containing protein 11 (254 aa).

In terms of domain architecture, MBD spans 4 to 74 (EEEVVSVELP…AEFDWTTSGT (71 aa)). The disordered stretch occupies residues 56–254 (KSHPGNPAIA…EKTAEGEATG (199 aa)). 4 stretches are compositionally biased toward basic and acidic residues: residues 80-97 (RISE…EPPK), 107-130 (SKKD…KDTE), 151-162 (ETERVNDAKENI), and 178-254 (ESMK…EATG). At Ser-116 the chain carries Phosphoserine.

In terms of tissue distribution, expressed in leaves (around hydathodes), buds, flowers (carpels and pollen grains), stems (around nodes), siliques, mature seeds and roots.

It is found in the nucleus. In terms of biological role, transcriptional regulator that binds DNA independently of its methylation status. Required during plant organogenesis and development. The polypeptide is Methyl-CpG-binding domain-containing protein 11 (MBD11) (Arabidopsis thaliana (Mouse-ear cress)).